Consider the following 1067-residue polypeptide: Eukaryotic translation initiation factor 3 subunit A (1067 aa).

Residues 92–121 (LKKFIELAEKKVTEAQAKADEIQSSLESAA) are a coiled coil. In terms of domain architecture, PCI spans 339–523 (MTKAASFVLL…GVLTFDTDIF (185 aa)). The stretch at 608–899 (RVLIEKKKEA…QKQREEEAEA (292 aa)) forms a coiled coil. 4 stretches are compositionally biased toward basic and acidic residues: residues 617–632 (AATD…EETR), 642–665 (EAEK…DEQD), 795–901 (EVSE…EARR), and 916–926 (AEPERPAERTA). 2 disordered regions span residues 617 to 665 (AATD…DEQD) and 795 to 1067 (EVSE…QQQQ). Low complexity-rich tracts occupy residues 965-976 (AAPAAAPAPAAE) and 1025-1046 (SSSS…AASS).

Belongs to the eIF-3 subunit A family. As to quaternary structure, component of the eukaryotic translation initiation factor 3 (eIF-3) complex.

It localises to the cytoplasm. Its function is as follows. RNA-binding component of the eukaryotic translation initiation factor 3 (eIF-3) complex, which is involved in protein synthesis of a specialized repertoire of mRNAs and, together with other initiation factors, stimulates binding of mRNA and methionyl-tRNAi to the 40S ribosome. The eIF-3 complex specifically targets and initiates translation of a subset of mRNAs involved in cell proliferation. This chain is Eukaryotic translation initiation factor 3 subunit A (tif32), found in Neosartorya fischeri (strain ATCC 1020 / DSM 3700 / CBS 544.65 / FGSC A1164 / JCM 1740 / NRRL 181 / WB 181) (Aspergillus fischerianus).